We begin with the raw amino-acid sequence, 831 residues long: Multiphosphoryl transfer protein (831 aa).

The HPr domain maps to 1-90 (MLTIQFLCPL…EYIQVRFIDS (90 aa)). His-15 functions as the Pros-phosphohistidine intermediate; for HPr activity in the catalytic mechanism. The residue at position 15 (His-15) is a Phosphohistidine; by EI. Residues 119–650 (GNVLASGVGV…AVKSQLRQLD (532 aa)) are PTS EI. His-298 serves as the catalytic Tele-phosphohistidine intermediate; for PTS EI activity. A Phosphohistidine; by autocatalysis modification is found at His-298. The phosphoenolpyruvate site is built by Arg-405 and Arg-441. Residues Glu-540 and Asp-564 each contribute to the Mg(2+) site. Residues 563-564 (ND) and Arg-574 contribute to the phosphoenolpyruvate site. Catalysis depends on Cys-611, which acts as the Proton donor; for EI activity. In terms of domain architecture, PTS EIIA type-2 spans 685–828 (PLLALENIFV…QSILTLLETE (144 aa)). The active-site Tele-phosphohistidine intermediate; for PTS EIIA activity is the His-747. Phosphohistidine; by HPr is present on His-747.

Belongs to the PEP-utilizing enzyme family. It depends on Mg(2+) as a cofactor.

It localises to the cytoplasm. The enzyme catalyses L-histidyl-[protein] + phosphoenolpyruvate = N(pros)-phospho-L-histidyl-[protein] + pyruvate. It carries out the reaction D-fructose(out) + N(pros)-phospho-L-histidyl-[protein] = D-fructose 1-phosphate(in) + L-histidyl-[protein]. Multifunctional protein that includes general (non sugar-specific) and sugar-specific components of the phosphoenolpyruvate-dependent sugar phosphotransferase system (sugar PTS). This major carbohydrate active transport system catalyzes the phosphorylation of incoming sugar substrates concomitantly with their translocation across the cell membrane. The enzyme II FryABC PTS system is involved in fructose transport. The polypeptide is Multiphosphoryl transfer protein (fryA) (Escherichia coli O157:H7).